Consider the following 293-residue polypeptide: Cyclohexadienyl dehydrogenase (293 aa).

The Prephenate/arogenate dehydrogenase domain maps to 5-293 (KHIAIIGLGL…ALKTDHDIRP (289 aa)). 6-30 (HIAIIGLGLIGSSAARATKAYCPDV) serves as a coordination point for NAD(+).

It belongs to the prephenate/arogenate dehydrogenase family. As to quaternary structure, homodimer.

The catalysed reaction is L-arogenate + NAD(+) = L-tyrosine + CO2 + NADH. It carries out the reaction prephenate + NAD(+) = 3-(4-hydroxyphenyl)pyruvate + CO2 + NADH. Its pathway is amino-acid biosynthesis; L-tyrosine biosynthesis; (4-hydroxyphenyl)pyruvate from prephenate (NAD(+) route): step 1/1. It functions in the pathway amino-acid biosynthesis; L-tyrosine biosynthesis; L-tyrosine from L-arogenate (NAD(+) route): step 1/1. Insensitive to feedback inhibition by L-tyrosine. In terms of biological role, can function as either prephenate dehydrogenase or as arogenate dehydrogenase in the biosynthesis of L-tyrosine. Catalyzes two analogous reactions: converts prephenate to 4-hydroxyphenylpyruvate and transforms L-arogenate to L-tyrosine. Is not able to utilize NADP(+) instead of NAD(+) as cosubstrate. The protein is Cyclohexadienyl dehydrogenase of Zymomonas mobilis subsp. mobilis (strain ATCC 31821 / ZM4 / CP4).